Consider the following 226-residue polypeptide: MNPIVINRLQRKLGYTFQQQELLLQALTHRSASSKHNERLEFLGDSILSFVIANELYRRFPRVDEGDMSRMRATLVRGNTLAEMAREFDLGECLRLGPGELKSGGFRRESILADTVEALIGGIFLDSDIHTIERLILAWYHSRLEEISPGDKQKDPKTRLQEYLQGRHLPLPSYLVVQVRGEAHDQEFTIHCQVSGLNEPVIGTGSSRRKAEQAAAEQALKQLELE.

The 123-residue stretch at 6–128 (INRLQRKLGY…LIGGIFLDSD (123 aa)) folds into the RNase III domain. Residue E41 participates in Mg(2+) binding. D45 is an active-site residue. Mg(2+)-binding residues include D114 and E117. Residue E117 is part of the active site. The DRBM domain occupies 155-225 (DPKTRLQEYL…AEQALKQLEL (71 aa)).

The protein belongs to the ribonuclease III family. Homodimer. Mg(2+) is required as a cofactor.

Its subcellular location is the cytoplasm. The enzyme catalyses Endonucleolytic cleavage to 5'-phosphomonoester.. Digests double-stranded RNA. Involved in the processing of primary rRNA transcript to yield the immediate precursors to the large and small rRNAs (23S and 16S). Processes some mRNAs, and tRNAs when they are encoded in the rRNA operon. Processes pre-crRNA and tracrRNA of type II CRISPR loci if present in the organism. The sequence is that of Ribonuclease 3 from Yersinia enterocolitica serotype O:8 / biotype 1B (strain NCTC 13174 / 8081).